The sequence spans 1073 residues: PX domain-containing protein LEC1 (1073 aa).

Residues 218–228 (CTESVDNDKSS) show a composition bias toward basic and acidic residues. The interval 218–240 (CTESVDNDKSSKSTPTSSPKSHA) is disordered. A compositionally biased stretch (low complexity) spans 229–238 (KSTPTSSPKS). Positions 273–506 (LFSKLSLGVP…RFFLSGPNLD (234 aa)) constitute a PX domain. A phosphoserine mark is found at serine 310 and serine 451. Residues 431 to 456 (IKEEDNIDEDEYEEEGEGEESDFDEY) form a disordered region. A compositionally biased stretch (acidic residues) spans 432-453 (KEEDNIDEDEYEEEGEGEESDF).

Its subcellular location is the endoplasmic reticulum membrane. The protein localises to the lipid droplet. In terms of biological role, phosphoinositide-binding protein that plays a role in regulation of ergosterol distribution in the cell. Facilitates ergosterol transport between plasma membrane and lipid droplets. In Saccharomyces cerevisiae (strain ATCC 204508 / S288c) (Baker's yeast), this protein is PX domain-containing protein LEC1.